A 97-amino-acid chain; its full sequence is Acylphosphatase (97 aa).

Residues 5–92 (RAHVWISGRV…GEFVRFEITF (88 aa)) form the Acylphosphatase-like domain. Catalysis depends on residues arginine 20 and asparagine 38.

The protein belongs to the acylphosphatase family.

It carries out the reaction an acyl phosphate + H2O = a carboxylate + phosphate + H(+). The protein is Acylphosphatase (acyP) of Syntrophobacter fumaroxidans (strain DSM 10017 / MPOB).